The following is a 37-amino-acid chain: Cytochrome b6-f complex subunit 5 (37 aa).

A helical transmembrane segment spans residues leucine 5–alanine 25.

This sequence belongs to the PetG family. As to quaternary structure, the 4 large subunits of the cytochrome b6-f complex are cytochrome b6, subunit IV (17 kDa polypeptide, PetD), cytochrome f and the Rieske protein, while the 4 small subunits are PetG, PetL, PetM and PetN. The complex functions as a dimer.

It is found in the cellular thylakoid membrane. In terms of biological role, component of the cytochrome b6-f complex, which mediates electron transfer between photosystem II (PSII) and photosystem I (PSI), cyclic electron flow around PSI, and state transitions. PetG is required for either the stability or assembly of the cytochrome b6-f complex. This is Cytochrome b6-f complex subunit 5 from Mastigocladus laminosus (Fischerella sp.).